A 122-amino-acid chain; its full sequence is MIQQESRLKVADNTGAKEILCIRVLGGSSRRYAGIGDVIVATVKDAIPGGNVKRGDVVKAVVVRTVKERRRPDGSYIKFDENAAVIIKPDNDPRGTRIFGPVGRELREKRFMKIISLAPEVL.

This sequence belongs to the universal ribosomal protein uL14 family. As to quaternary structure, part of the 50S ribosomal subunit. Forms a cluster with proteins L3 and L19. In the 70S ribosome, L14 and L19 interact and together make contacts with the 16S rRNA in bridges B5 and B8.

Binds to 23S rRNA. Forms part of two intersubunit bridges in the 70S ribosome. This chain is Large ribosomal subunit protein uL14, found in Mycobacterium tuberculosis (strain ATCC 25177 / H37Ra).